The following is a 246-amino-acid chain: DNA repair protein RecO (246 aa).

It belongs to the RecO family.

Functionally, involved in DNA repair and RecF pathway recombination. This is DNA repair protein RecO from Methylorubrum extorquens (strain CM4 / NCIMB 13688) (Methylobacterium extorquens).